The chain runs to 106 residues: A-type ATP synthase subunit F (106 aa).

The protein belongs to the V-ATPase F subunit family. Has multiple subunits with at least A(3), B(3), C, D, E, F, H, I and proteolipid K(x).

Its subcellular location is the cell membrane. Component of the A-type ATP synthase that produces ATP from ADP in the presence of a proton gradient across the membrane. This chain is A-type ATP synthase subunit F, found in Haloferax volcanii (strain ATCC 29605 / DSM 3757 / JCM 8879 / NBRC 14742 / NCIMB 2012 / VKM B-1768 / DS2) (Halobacterium volcanii).